The following is a 256-amino-acid chain: Indole-3-glycerol phosphate synthase (256 aa).

The protein belongs to the TrpC family.

It catalyses the reaction 1-(2-carboxyphenylamino)-1-deoxy-D-ribulose 5-phosphate + H(+) = (1S,2R)-1-C-(indol-3-yl)glycerol 3-phosphate + CO2 + H2O. Its pathway is amino-acid biosynthesis; L-tryptophan biosynthesis; L-tryptophan from chorismate: step 4/5. This is Indole-3-glycerol phosphate synthase from Caldanaerobacter subterraneus subsp. tengcongensis (strain DSM 15242 / JCM 11007 / NBRC 100824 / MB4) (Thermoanaerobacter tengcongensis).